A 433-amino-acid chain; its full sequence is T-box transcription factor T (433 aa).

The T-box DNA-binding region spans 49-217 (LWLRFKELTN…YNPFAKAFLD (169 aa)).

As to quaternary structure, monomer. Binds DNA as a monomer.

It localises to the nucleus. Involved in the transcriptional regulation of genes required for mesoderm formation and differentiation. Binds to a palindromic site (called T site) and activates gene transcription when bound to such a site. The sequence is that of T-box transcription factor T from Gallus gallus (Chicken).